The sequence spans 445 residues: Cyclic GMP-AMP phosphodiesterase SMPDL3A (445 aa).

The N-terminal stretch at 1–22 (MALLGNFLCCLLVAWLCGPGLG) is a signal peptide. Positions 42 and 44 each coordinate Zn(2+). A disulfide bridge links cysteine 59 with cysteine 78. The N-linked (GlcNAc...) asparagine glycan is linked to asparagine 66. Aspartate 107 provides a ligand contact to Zn(2+). Residue histidine 111 coordinates ATP. Residue asparagine 128 is glycosylated (N-linked (GlcNAc...) asparagine). Residue asparagine 148 coordinates Zn(2+). ATP is bound by residues asparagine 148 and histidine 149. Residues asparagine 219 and asparagine 235 are each glycosylated (N-linked (GlcNAc...) asparagine). Histidine 249 contacts Zn(2+). Tyrosine 257 is an ATP binding site. The Zn(2+) site is built by histidine 290 and histidine 292. Asparagine 353 and asparagine 364 each carry an N-linked (GlcNAc...) asparagine glycan. 2 disulfides stabilise this stretch: cysteine 417–cysteine 421 and cysteine 427–cysteine 440.

The protein belongs to the acid sphingomyelinase family. In terms of assembly, monomer. Homodimer; homodimerizes following 2',3'-cGAMP-binding. The cofactor is Zn(2+). N-glycosylated. As to expression, detected in blood serum (at protein level).

Its subcellular location is the secreted. The enzyme catalyses 2',3'-cGAMP + H2O = 5'-pGpA(2'-5') + H(+). It carries out the reaction 5'-pGpA(2'-5') + H2O = 5'-GpA(2'-5') + phosphate. It catalyses the reaction a ribonucleoside 5'-triphosphate + H2O = a ribonucleoside 5'-diphosphate + phosphate + H(+). The catalysed reaction is ATP + H2O = ADP + phosphate + H(+). With respect to regulation, requires micromolar levels of Zn(2+) for activity. Inhibited by millimolar levels of Zn(2+). Its function is as follows. Cyclic-nucleotide phosphodiesterase that acts as a negative regulator of innate immunity by mediating degradation of 2',3'-cGAMP, thereby inhibiting the cGAS-STING signaling. Specifically linearizes 2',3'-cGAMP into 2'5'-bond pGpA and further hydrolyzes pGpA to produce GpA. Also has in vitro nucleotide phosphodiesterase activity with nucleoside triphosphates, such as ATP. Has in vitro activity with p-nitrophenyl-TMP. Has lower activity with nucleoside diphosphates, and no activity with nucleoside monophosphates. Has in vitro activity with CDP-choline, giving rise to CMP and phosphocholine. Has in vitro activity with CDP-ethanolamine. Does not have sphingomyelin phosphodiesterase activity. This is Cyclic GMP-AMP phosphodiesterase SMPDL3A from Mus musculus (Mouse).